A 145-amino-acid polypeptide reads, in one-letter code: Large ribosomal subunit protein uL13 (145 aa).

It belongs to the universal ribosomal protein uL13 family. In terms of assembly, part of the 50S ribosomal subunit. Interacts weakly with proteins L3 and L6.

In terms of biological role, this protein is one of the early assembly proteins of the 50S ribosomal subunit. Binds to 23S rRNA. The protein is Large ribosomal subunit protein uL13 of Haloarcula marismortui (strain ATCC 43049 / DSM 3752 / JCM 8966 / VKM B-1809) (Halobacterium marismortui).